A 155-amino-acid chain; its full sequence is Myosin light chain alkali (155 aa).

2 consecutive EF-hand domains span residues 7–41 and 80–115; these read REVE…LNLN and GCYE…LGES.

Myosin is a hexamer of 2 heavy chains and 4 light chains.

This is Myosin light chain alkali (Mlc1) from Drosophila virilis (Fruit fly).